The sequence spans 204 residues: FlaA locus 22.9 kDa protein (204 aa).

The disordered stretch occupies residues 115 to 140 (EKTAEDQKKSSEDHTEGSADSKASSE).

In Bacillus subtilis (strain 168), this protein is FlaA locus 22.9 kDa protein (ylxF).